The sequence spans 107 residues: Acetyl-CoA acetyltransferase (107 aa).

C88 functions as the Acyl-thioester intermediate in the catalytic mechanism.

This sequence belongs to the thiolase-like superfamily. Thiolase family. In terms of assembly, homotetramer.

It localises to the cytoplasm. The enzyme catalyses 2 acetyl-CoA = acetoacetyl-CoA + CoA. In terms of biological role, catalyzes the condensation of two molecules of acetyl-CoA to produce acetoacetyl-CoA. This Clostridioides difficile (Peptoclostridium difficile) protein is Acetyl-CoA acetyltransferase (thi).